We begin with the raw amino-acid sequence, 158 residues long: C-type lectin galactose-binding isoform (158 aa).

An N-terminal signal peptide occupies residues 1–23 (MGRFLLVTLSLLVVAFSLNGANS). Disulfide bonds link C26–C37, C54–C154, and C129–C146. A C-type lectin domain is found at 33 to 155 (RNGFCYKVFN…CTALRPFLCQ (123 aa)). The Ca(2+) site is built by Q119, D121, and E127. Residues 119–121 (QPD) carry the Galactose-binding motif. N134 carries an N-linked (GlcNAc...) asparagine glycan. The Ca(2+) site is built by N142 and D143.

The protein belongs to the true venom lectin family. Homodimer; disulfide-linked. As to expression, expressed by the venom gland.

It localises to the secreted. Its function is as follows. Galactose-binding lectin that binds to and agglutinates erythrocytes in a calcium-dependent manner. The chain is C-type lectin galactose-binding isoform from Pseudechis porphyriacus (Red-bellied black snake).